The chain runs to 240 residues: MATDELASKLSRRLQMEGEGGEATEQPGLNGAAAAAAAEAPDETAQALGSADDELSAKLLRRADLNQGIGEPQSPSRRVFNPYTEFKEFSRKQIKDMEKMFKQYDAGRDGFIDLMELKLMMEKLGAPQTHLGLKSMIQEVDEDFDSKLSFREFLLIFRKAAAGELQEDSGLQVLARLSEIDVSTEGVKGAKNFFEAKVQAINVSSRFEEEIKAEQEERKKQAEEVKQRKAAFKELQSTFK.

The interval 1–51 (MATDELASKLSRRLQMEGEGGEATEQPGLNGAAAAAAAEAPDETAQALGSA) is disordered. A2 carries the post-translational modification N-acetylalanine. Position 11 is a phosphoserine (S11). Residues 32–47 (AAAAAAAEAPDETAQA) show a composition bias toward low complexity. S74 and S76 each carry phosphoserine. Position 83 is a phosphotyrosine (Y83). 2 consecutive EF-hand domains span residues 92 to 127 (KQIK…LGAP) and 128 to 163 (QTHL…AAAG). The Ca(2+) site is built by D105, D109, E116, D141, D143, D145, K147, and E152. K233 bears the N6-acetyllysine mark.

In terms of assembly, interacts with CASP9; with inactive form. Detected in thymus, kidney, spleen, lung, liver and brain. Highest abundance in brain and lowest in kidney and thymus.

It localises to the membrane raft. Functionally, may regulate B-cell receptor (BCR)-induced immature and primary B-cell apoptosis. Plays a role as negative regulator of the canonical NF-kappa-B-activating branch. Controls spontaneous apoptosis through the regulation of BCL2L1 abundance. This chain is EF-hand domain-containing protein D2 (Efhd2), found in Mus musculus (Mouse).